Consider the following 1072-residue polypeptide: Carbamoyl phosphate synthase large chain (1072 aa).

The interval 1 to 401 is carboxyphosphate synthetic domain; the sequence is MPKYKDISKV…SLLKAVRSLE (401 aa). ATP is bound by residues R129, R169, G175, G176, K208, L210, E215, G241, V242, H243, Q284, and E298. The ATP-grasp 1 domain occupies 133–327; sequence KRKMQEIGEP…IAKIAAKIAI (195 aa). Residues Q284, E298, and N300 each contribute to the Mg(2+) site. Residues Q284, E298, and N300 each contribute to the Mn(2+) site. The interval 402 to 544 is oligomerization domain; that stretch reads IKAYGLRLDS…YIYSTYCEED (143 aa). A carbamoyl phosphate synthetic domain region spans residues 545–929; it reads EVETHDIPKV…ALYKALEGAG (385 aa). The 191-residue stretch at 671-861 folds into the ATP-grasp 2 domain; sequence SKLLKELNIN…MVKLAVEVAL (191 aa). Residues R707, K746, I748, E752, G777, V778, H779, S780, Q820, and E832 each coordinate ATP. The Mg(2+) site is built by Q820, E832, and N834. Residues Q820, E832, and N834 each coordinate Mn(2+). The 143-residue stretch at 930 to 1072 folds into the MGS-like domain; it reads LKIPKKGKIL…QKDNVKNLVL (143 aa). The segment at 930 to 1072 is allosteric domain; sequence LKIPKKGKIL…QKDNVKNLVL (143 aa).

Belongs to the CarB family. As to quaternary structure, composed of two chains; the small (or glutamine) chain promotes the hydrolysis of glutamine to ammonia, which is used by the large (or ammonia) chain to synthesize carbamoyl phosphate. Tetramer of heterodimers (alpha,beta)4. Mg(2+) is required as a cofactor. Requires Mn(2+) as cofactor.

It catalyses the reaction hydrogencarbonate + L-glutamine + 2 ATP + H2O = carbamoyl phosphate + L-glutamate + 2 ADP + phosphate + 2 H(+). It carries out the reaction hydrogencarbonate + NH4(+) + 2 ATP = carbamoyl phosphate + 2 ADP + phosphate + 2 H(+). It functions in the pathway amino-acid biosynthesis; L-arginine biosynthesis; carbamoyl phosphate from bicarbonate: step 1/1. Its pathway is pyrimidine metabolism; UMP biosynthesis via de novo pathway; (S)-dihydroorotate from bicarbonate: step 1/3. Its function is as follows. Large subunit of the glutamine-dependent carbamoyl phosphate synthetase (CPSase). CPSase catalyzes the formation of carbamoyl phosphate from the ammonia moiety of glutamine, carbonate, and phosphate donated by ATP, constituting the first step of 2 biosynthetic pathways, one leading to arginine and/or urea and the other to pyrimidine nucleotides. The large subunit (synthetase) binds the substrates ammonia (free or transferred from glutamine from the small subunit), hydrogencarbonate and ATP and carries out an ATP-coupled ligase reaction, activating hydrogencarbonate by forming carboxy phosphate which reacts with ammonia to form carbamoyl phosphate. This chain is Carbamoyl phosphate synthase large chain, found in Caldanaerobacter subterraneus subsp. tengcongensis (strain DSM 15242 / JCM 11007 / NBRC 100824 / MB4) (Thermoanaerobacter tengcongensis).